A 243-amino-acid polypeptide reads, in one-letter code: Venom nerve growth factor 2 (243 aa).

Residues 1 to 18 (MSMLCYTLIIAFLIGIWA) form the signal peptide. Positions 19 to 125 (APKSEDNVPL…TLNRNIRAKR (107 aa)) are excised as a propeptide. The segment covering 47–66 (GLKTSRNTDQRHPAPKKAED) has biased composition (basic and acidic residues). The tract at residues 47 to 67 (GLKTSRNTDQRHPAPKKAEDQ) is disordered. 2 disulfides stabilise this stretch: Cys139–Cys204 and Cys192–Cys234. The N-linked (GlcNAc...) asparagine glycan is linked to Asn148.

It belongs to the NGF-beta family. Homodimer; non-covalently linked. As to expression, expressed by the venom gland.

The protein resides in the secreted. Its function is as follows. Nerve growth factor is important for the development and maintenance of the sympathetic and sensory nervous systems. It stimulates division and differentiation of sympathetic and embryonic sensory neurons as well as basal forebrain cholinergic neurons in the brain. Its relevance in the snake venom is not clear. However, it has been shown to inhibit metalloproteinase-dependent proteolysis of platelet glycoprotein Ib alpha, suggesting a metalloproteinase inhibition to prevent metalloprotease autodigestion and/or protection against prey proteases. Binds a lipid between the two protein chains in the homodimer. The lipid-bound form promotes histamine relase from mouse mast cells, contrary to the lipid-free form. This Pseudonaja textilis (Eastern brown snake) protein is Venom nerve growth factor 2.